The primary structure comprises 662 residues: Methionine--tRNA ligase (662 aa).

The 'HIGH' region signature appears at 14 to 24 (YYPSGKLHLGS). The 'KMSKS' region signature appears at 308-312 (KMSKS). Position 311 (lysine 311) interacts with ATP. One can recognise a tRNA-binding domain in the interval 559–662 (DFEKIELKVA…DDVPAGSLIG (104 aa)).

It belongs to the class-I aminoacyl-tRNA synthetase family. MetG type 2B subfamily. Homodimer.

It is found in the cytoplasm. The enzyme catalyses tRNA(Met) + L-methionine + ATP = L-methionyl-tRNA(Met) + AMP + diphosphate. Functionally, is required not only for elongation of protein synthesis but also for the initiation of all mRNA translation through initiator tRNA(fMet) aminoacylation. This Lactococcus lactis subsp. lactis (strain IL1403) (Streptococcus lactis) protein is Methionine--tRNA ligase (metG).